Reading from the N-terminus, the 191-residue chain is Superoxide dismutase [Mn/Fe] (191 aa).

Fe(3+) is bound by residues H27, H74, D157, and H161. Mn(2+) is bound by residues H27, H74, D157, and H161.

Belongs to the iron/manganese superoxide dismutase family. As to quaternary structure, homodimer. It depends on Mn(2+) as a cofactor. Requires Fe(3+) as cofactor.

The catalysed reaction is 2 superoxide + 2 H(+) = H2O2 + O2. Its activity is regulated as follows. Inhibited by hydrogen peroxide. In terms of biological role, destroys superoxide anion radicals which are normally produced within the cells and which are toxic to biological systems. Catalyzes the dismutation of superoxide anion radicals into O2 and H2O2 by successive reduction and oxidation of the transition metal ion at the active site. This Porphyromonas gingivalis (strain ATCC BAA-308 / W83) protein is Superoxide dismutase [Mn/Fe] (sodB).